Consider the following 89-residue polypeptide: Small ribosomal subunit protein uS15 (89 aa).

Residues Met1–Glu10 show a composition bias toward basic and acidic residues. Residues Met1–Gly23 form a disordered region. A compositionally biased stretch (polar residues) spans Ala14–Gly23.

The protein belongs to the universal ribosomal protein uS15 family. In terms of assembly, part of the 30S ribosomal subunit. Forms a bridge to the 50S subunit in the 70S ribosome, contacting the 23S rRNA.

Its function is as follows. One of the primary rRNA binding proteins, it binds directly to 16S rRNA where it helps nucleate assembly of the platform of the 30S subunit by binding and bridging several RNA helices of the 16S rRNA. In terms of biological role, forms an intersubunit bridge (bridge B4) with the 23S rRNA of the 50S subunit in the ribosome. The sequence is that of Small ribosomal subunit protein uS15 from Synechococcus sp. (strain WH7803).